Here is a 190-residue protein sequence, read N- to C-terminus: dTTP/UTP pyrophosphatase (190 aa).

The active-site Proton acceptor is the D71.

It belongs to the Maf family. YhdE subfamily. A divalent metal cation is required as a cofactor.

It is found in the cytoplasm. The catalysed reaction is dTTP + H2O = dTMP + diphosphate + H(+). It catalyses the reaction UTP + H2O = UMP + diphosphate + H(+). Functionally, nucleoside triphosphate pyrophosphatase that hydrolyzes dTTP and UTP. May have a dual role in cell division arrest and in preventing the incorporation of modified nucleotides into cellular nucleic acids. The chain is dTTP/UTP pyrophosphatase from Xanthomonas oryzae pv. oryzae (strain MAFF 311018).